The primary structure comprises 604 residues: Prostaglandin G/H synthase 2 (604 aa).

Residues 1–17 (MLARAGLLCASLSPPHA) form the signal peptide. In terms of domain architecture, EGF-like spans 18-55 (ANPCCSNPCQNQGVCMSIGFDQYMCDCSRTGFYGENCS). 4 disulfide bridges follow: cysteine 21–cysteine 32, cysteine 22–cysteine 145, cysteine 26–cysteine 42, and cysteine 44–cysteine 54. Asparagine 53 is a glycosylation site (N-linked (GlcNAc...) asparagine). A substrate-binding site is contributed by arginine 106. N-linked (GlcNAc...) asparagine glycosylation occurs at asparagine 130. Residue histidine 193 is the Proton acceptor of the active site. A substrate-binding site is contributed by tyrosine 341. Residue tyrosine 371 is the For cyclooxygenase activity of the active site. Histidine 374 provides a ligand contact to heme b. Asparagine 396 carries N-linked (GlcNAc...) asparagine glycosylation. Cysteine 526 is subject to S-nitrosocysteine. Residues cysteine 555 and cysteine 561 are joined by a disulfide bond. N-linked (GlcNAc...) asparagine glycosylation is present at asparagine 580.

It belongs to the prostaglandin G/H synthase family. In terms of assembly, homodimer. Requires heme b as cofactor. In terms of processing, S-nitrosylation by NOS2 (iNOS) activates enzyme activity. S-nitrosylation may take place on different Cys residues in addition to Cys-526.

Its subcellular location is the microsome membrane. It is found in the endoplasmic reticulum membrane. It localises to the nucleus inner membrane. The protein localises to the nucleus outer membrane. It catalyses the reaction (5Z,8Z,11Z,14Z)-eicosatetraenoate + AH2 + 2 O2 = prostaglandin H2 + A + H2O. The catalysed reaction is (5Z,8Z,11Z,14Z)-eicosatetraenoate + 2 O2 = prostaglandin G2. The enzyme catalyses prostaglandin G2 + AH2 = prostaglandin H2 + A + H2O. It carries out the reaction (5Z,8Z,11Z,14Z,17Z)-eicosapentaenoate + 2 O2 = prostaglandin G3. It catalyses the reaction prostaglandin G3 + AH2 = prostaglandin H3 + A + H2O. The catalysed reaction is (8Z,11Z,14Z)-eicosatrienoate + 2 O2 = prostaglandin G1. The enzyme catalyses prostaglandin G1 + AH2 = prostaglandin H1 + A + H2O. It carries out the reaction 2-(5Z,8Z,11Z,14Z)-eicosatetraenoyl-sn-glycero-3-phosphoethanolamine + 2 O2 = 2-(prostaglandin G2)-sn-glycero-3-phosphoethanolamine. It catalyses the reaction 2-(prostaglandin G2)-sn-glycero-3-phosphoethanolamine + AH2 = 2-(prostaglandin H2)-sn-glycero-3-phosphoethanolamine + A + H2O. The catalysed reaction is 2-(5Z,8Z,11Z,14Z)-eicosatetraenoyl-sn-glycero-3-phosphocholine + 2 O2 = 2-(prostaglandin G2)-sn-glycero-3-phosphocholine. The enzyme catalyses 2-(prostaglandin G2)-sn-glycero-3-phosphocholine + AH2 = 2-(prostaglandin H2)-sn-glycero-3-phosphocholine + A + H2O. It carries out the reaction (15S)-hydroperoxy-(5Z,8Z,11Z,13E)-eicosatetraenoate + AH2 = (15S)-hydroxy-(5Z,8Z,11Z,13E)-eicosatetraenoate + A + H2O. It catalyses the reaction 2-(5Z,8Z,11Z,14Z)-eicosatetraenoyl-sn-glycero-3-phosphocholine + AH2 + O2 = 2-[(15S)-hydroxy-(5Z,8Z,11Z,13E)-eicosatetraenoyl]-sn-glycero-3-phosphocholine + A + H2O. The catalysed reaction is 2-(5Z,8Z,11Z,14Z)-eicosatetraenoyl-sn-glycero-3-phosphocholine + AH2 + O2 = 2-[(15R)-hydroxy-(5Z,8Z,11Z,13E)-eicosatetraenoyl]-sn-glycero-3-phosphocholine + A + H2O. The enzyme catalyses 2-(5Z,8Z,11Z,14Z)-eicosatetraenoyl-sn-glycero-3-phosphocholine + AH2 + O2 = 2-[(11R)-hydroxy-(5Z,8Z,12E,14Z)-eicosatetraenoyl]-sn-glycero-3-phosphocholine + A + H2O. It carries out the reaction (9Z,12Z)-octadecadienoate + AH2 + O2 = 9-hydroxy-(10E,12Z)-octadecadienoate + A + H2O. It catalyses the reaction (9Z,12Z)-octadecadienoate + AH2 + O2 = 13-hydroxy-(9Z,11E)-octadecadienoate + A + H2O. The catalysed reaction is (5Z,8Z,11Z,14Z)-eicosatetraenoate + AH2 + O2 = (15R)-hydroxy-(5Z,8Z,11Z,13E)-eicosatetraenoate + A + H2O. The enzyme catalyses (5Z,8Z,11Z,14Z)-eicosatetraenoate + AH2 + O2 = (11R)-hydroxy-(5Z,8Z,12E,14Z)-eicosatetraenoate + A + H2O. It carries out the reaction (5Z,8Z,11Z,14Z,17Z)-eicosapentaenoate + AH2 + O2 = (11R)-hydroxy-(5Z,8Z,12E,14Z,17Z)-eicosapentaenoate + A + H2O. It catalyses the reaction (5Z,8Z,11Z,14Z,17Z)-eicosapentaenoate + AH2 + O2 = (18S)-hydroxy-(5Z,8Z,11Z,14Z,16E)-eicosapentaenoate + A + H2O. The catalysed reaction is (5Z,8Z,11Z,14Z,17Z)-eicosapentaenoate + AH2 + O2 = (18R)-hydroxy-(5Z,8Z,11Z,14Z,16E)-eicosapentaenoate + A + H2O. The enzyme catalyses (5Z,8Z,11Z,14Z,17Z)-eicosapentaenoate + AH2 + O2 = (15R)-hydroxy-(5Z,8Z,11Z,13E,17Z)-eicosapentaenoate + A + H2O. It carries out the reaction (5Z,8Z,11Z,14Z,17Z)-eicosapentaenoate + AH2 + O2 = (15S)-hydroxy-(5Z,8Z,11Z,13E,17Z)-eicosapentaenoate + A + H2O. It catalyses the reaction (7Z,10Z,13Z,16Z,19Z)-docosapentaenoate + AH2 + O2 = 13R-hydroxy-(7Z,10Z,14E,16Z,19Z)-docosapentaenoate + A + H2O. The catalysed reaction is (4Z,7Z,10Z,13Z,16Z,19Z)-docosahexaenoate + AH2 + O2 = 13-hydroxy-(4Z,7Z,10Z,14E,16Z,19Z)-docosahexaenoate + A + H2O. The enzyme catalyses (5S)-hydroxy-(6E,8Z,11Z,14Z)-eicosatetraenoate + AH2 + O2 = (5S,15R)-dihydroxy-(6E,8Z,11Z,13E)-eicosatetraenoate + A + H2O. It carries out the reaction (4Z,7Z,10Z,13Z,16Z,19Z)-docosahexaenoate + AH2 + O2 = 17R-hydroxy-(4Z,7Z,10Z,13Z,15E,19Z)-docosahexaenoate + A + H2O. It catalyses the reaction (5S)-hydroxy-(6E,8Z,11Z,14Z)-eicosatetraenoate + AH2 + O2 = (5S,15S)-dihydroxy-(6E,8Z,11Z,13E)-eicosatetraenoate + A + H2O. The catalysed reaction is (5S)-hydroxy-(6E,8Z,11Z,14Z)-eicosatetraenoate + AH2 + O2 = (5S,11R)-dihydroxy-(6E,8Z,12E,14Z)-eicosatetraenoate + A + H2O. The enzyme catalyses 2-(5Z,8Z,11Z,14Z-eicosatetraenoyl)-glycerol + 2 O2 = 2-glyceryl-prostaglandin G2. It carries out the reaction 2-glyceryl-prostaglandin G2 + AH2 = 2-glyceryl-prostaglandin H2 + A + H2O. It catalyses the reaction (5Z,8Z,11Z,14Z)-eicosatetraenoate + O2 = (15R)-hydroperoxy-(5Z,8Z,11Z,13E)-eicosatetraenoate. The catalysed reaction is (5Z,8Z,11Z,14Z)-eicosatetraenoate + O2 = 11R-hydroperoxy-(5Z,8Z,12E,14Z)-eicosatetraenoate. The enzyme catalyses (9Z,12Z)-octadecadienoate + AH2 + O2 = (9R)-hydroxy-(10E,12Z)-octadecadienoate + A + H2O. It carries out the reaction (9Z,12Z)-octadecadienoate + AH2 + O2 = (9S)-hydroxy-(10E,12Z)-octadecadienoate + A + H2O. It catalyses the reaction (9Z,12Z)-octadecadienoate + AH2 + O2 = (13S)-hydroxy-(9Z,11E)-octadecadienoate + A + H2O. The catalysed reaction is (9Z,12Z)-octadecadienoate + AH2 + O2 = (13R)-hydroxy-(9Z,11E)-octadecadienoate + A + H2O. Its pathway is lipid metabolism; prostaglandin biosynthesis. In terms of biological role, dual cyclooxygenase and peroxidase in the biosynthesis pathway of prostanoids, a class of C20 oxylipins mainly derived from arachidonate ((5Z,8Z,11Z,14Z)-eicosatetraenoate, AA, C20:4(n-6)), with a particular role in the inflammatory response. The cyclooxygenase activity oxygenates AA to the hydroperoxy endoperoxide prostaglandin G2 (PGG2), and the peroxidase activity reduces PGG2 to the hydroxy endoperoxide prostaglandin H2 (PGH2), the precursor of all 2-series prostaglandins and thromboxanes. This complex transformation is initiated by abstraction of hydrogen at carbon 13 (with S-stereochemistry), followed by insertion of molecular O2 to form the endoperoxide bridge between carbon 9 and 11 that defines prostaglandins. The insertion of a second molecule of O2 (bis-oxygenase activity) yields a hydroperoxy group in PGG2 that is then reduced to PGH2 by two electrons. Similarly catalyzes successive cyclooxygenation and peroxidation of dihomo-gamma-linoleate (DGLA, C20:3(n-6)) and eicosapentaenoate (EPA, C20:5(n-3)) to corresponding PGH1 and PGH3, the precursors of 1- and 3-series prostaglandins. In an alternative pathway of prostanoid biosynthesis, converts 2-arachidonoyl lysophopholipids to prostanoid lysophopholipids, which are then hydrolyzed by intracellular phospholipases to release free prostanoids. Metabolizes 2-arachidonoyl glycerol yielding the glyceryl ester of PGH2, a process that can contribute to pain response. Generates lipid mediators from n-3 and n-6 polyunsaturated fatty acids (PUFAs) via a lipoxygenase-type mechanism. Oxygenates PUFAs to hydroperoxy compounds and then reduces them to corresponding alcohols. Plays a role in the generation of resolution phase interaction products (resolvins) during both sterile and infectious inflammation. Metabolizes docosahexaenoate (DHA, C22:6(n-3)) to 17R-HDHA, a precursor of the D-series resolvins (RvDs). As a component of the biosynthetic pathway of E-series resolvins (RvEs), converts eicosapentaenoate (EPA, C20:5(n-3)) primarily to 18S-HEPE that is further metabolized by ALOX5 and LTA4H to generate 18S-RvE1 and 18S-RvE2. In vascular endothelial cells, converts docosapentaenoate (DPA, C22:5(n-3)) to 13R-HDPA, a precursor for 13-series resolvins (RvTs) shown to activate macrophage phagocytosis during bacterial infection. In activated leukocytes, contributes to oxygenation of hydroxyeicosatetraenoates (HETE) to diHETES (5,15-diHETE and 5,11-diHETE). Can also use linoleate (LA, (9Z,12Z)-octadecadienoate, C18:2(n-6)) as substrate and produce hydroxyoctadecadienoates (HODEs) in a regio- and stereospecific manner, being (9R)-HODE ((9R)-hydroxy-(10E,12Z)-octadecadienoate) and (13S)-HODE ((13S)-hydroxy-(9Z,11E)-octadecadienoate) its major products. During neuroinflammation, plays a role in neuronal secretion of specialized preresolving mediators (SPMs) 15R-lipoxin A4 that regulates phagocytic microglia. This chain is Prostaglandin G/H synthase 2 (PTGS2), found in Neovison vison (American mink).